Here is a 1036-residue protein sequence, read N- to C-terminus: MFAQLDTKTVYSFMDSLIDLNHYFERAKQFGYHTIGIMDKDNLYGAYHFIKGCQKNGLQPVLGLEVEILYQERQVLLNLIAQNTQGYHQLLKISTAKMSGKLHMDYLCQHLEGIAVIIPSKGWSDTLVVPFDYYIGVDQYTDLSHMDSKRQLIPLRTVRYFAQDDMETLHMLHAIRDNLSLAETPVVESDQELTDCQQLTTFYQTHCPQALQNLEDLVSGIYYDFDTNLKLPHFNRDKSAKQELQELTEAGLKEKGLWKEPYQSRLLHELVIISDMGFDDYFLIVWDLLRFGRSKGYYMGMGRGSAAGSLVAYALNITGIDPVQHDLLFERFLNKERYSMPDIDIDLPDIYRSEFLRYVRNRYGSDHSAQIVTFSTFGPKQAIRDVFKRFGVPEYELTNLTKKIGFKDSLATVYEKSISFRQVINSRTEFQKAFAIAKRIEGNPRQTSIHAAGIVMSDDTLTNHIPLKSGDDMMITQYDAHAIEANGLLKMDFLGLRNLTFVQKMQEKVAKDYGCQIDIAAIDLEDPQTLALFAKGDTKGIFQFEQNGAINLLKRIKPQRFEEIVATTSLNRPGASDYTTNFIKRREGQEKIDLIDPVIAPILEPTYGIMLYQEQVMQIAQIYAGFTLGKADLLRRAMSKKNLQEMQKMEEDFIASAKHLGRAEETARGLFKRMEKFAGYGFNRSHAFAYSALAFQLAYFKAHYPAVFYDIMMNYSSSDYITDALESDFQVAQVTINSIPYTDKIEASKIYMGLKNIKGLPRDFAYWIIEQRPFNSVEDFLTRTPEKYQKKVFLEPLIKIGLFDCFEPNRKKILDNLDGLLVFVNELGSLFSDSSFSWVDAKDYSATEKYSLEQEIVGVGMSKHPLIDIAEKSTQTFTPISQLVKESEAVVLIQIDSIRIIRTKTSGQQMAFLSVNDTKKKLDVTLFPQEYAIYKDQLIEGEFYYLKGRIKERDHRLQMVCQQVQMAISQKYWLLVENHQFDSQISEILGAFPGTTPVVIHYQKNKETIALTKIQVHVTENLKEKLRPFVLKTVFR.

The protein belongs to the DNA polymerase type-C family. DnaE subfamily. DNA polymerase III contains a core (composed of alpha, epsilon and theta chains) that associates with a tau subunit. This core dimerizes to form the PolIII' complex. PolIII' associates with the gamma complex (composed of gamma, delta, delta', psi and chi chains) and with the beta chain to form the complete DNA polymerase III complex.

It localises to the cytoplasm. The catalysed reaction is DNA(n) + a 2'-deoxyribonucleoside 5'-triphosphate = DNA(n+1) + diphosphate. Functionally, DNA polymerase III is a complex, multichain enzyme responsible for most of the replicative synthesis in bacteria. This DNA polymerase also exhibits 3' to 5' exonuclease activity. The alpha chain is the DNA polymerase. In Streptococcus pyogenes serotype M3 (strain ATCC BAA-595 / MGAS315), this protein is DNA polymerase III subunit alpha (dnaE).